A 256-amino-acid polypeptide reads, in one-letter code: Small ribosomal subunit protein eS1A (256 aa).

Alanine 2 carries the post-translational modification N-acetylalanine; partial.

Belongs to the eukaryotic ribosomal protein eS1 family. As to quaternary structure, component of the small ribosomal subunit. Mature ribosomes consist of a small (40S) and a large (60S) subunit. The 40S subunit contains about 33 different proteins and 1 molecule of RNA (18S). The 60S subunit contains about 49 different proteins and 3 molecules of RNA (25S, 5.8S and 5S).

It is found in the cytoplasm. The protein is Small ribosomal subunit protein eS1A of Debaryomyces hansenii (strain ATCC 36239 / CBS 767 / BCRC 21394 / JCM 1990 / NBRC 0083 / IGC 2968) (Yeast).